The sequence spans 396 residues: Activity-regulated cytoskeleton-associated protein (396 aa).

Residues 54–78 (SKQVERELKGLHRSVGKLESNLDGY) adopt a coiled-coil conformation. The interval 89–100 (KSIKACLCRCQE) is interaction with SH3GL1 or SH3GL3. The interaction with DNM2 stretch occupies residues 195-214 (QPWVPGEDGQPSPGVDTQIF). Ser260 carries the post-translational modification Phosphoserine. Glycyl lysine isopeptide (Lys-Gly) (interchain with G-Cter in ubiquitin) cross-links involve residues Lys268 and Lys269. The residue at position 278 (Thr278) is a Phosphothreonine. The segment at 356–396 (QDDLEQAAEPAGPHLPVEDEAETLTPAPNSESVASDRTQPE) is disordered. The segment covering 381–396 (PAPNSESVASDRTQPE) has biased composition (polar residues).

This sequence belongs to the ARC/ARG3.1 family. Homooligomer; homooligomerizes into virion-like capsids. Interacts with SH3GL1/endophilin-2, SH3GL3/endophilin-3 and DNM2/DYN2. Interacts with CAMK2B (in the kinase inactive state); leading to target ARC to inactive synapses. Interacts with PSEN1. In terms of processing, palmitoylation anchors the protein into the membrane by allowing direct insertion into the hydrophobic core of the lipid bilayer. Post-translationally, ubiquitinated by UBE3A, leading to its degradation by the proteasome, thereby promoting AMPA receptors (AMPARs) expression at synapses. Ubiquitinated by RNF216 at Lys-268 and Lys-269 limiting ARC protein levels induced by synaptic activity and thus regulating ARC-dependent forms of synaptic plasticity. Phosphorylation at Ser-260 by CaMK2 prevents homooligomerization into virion-like capsids by disrupting an interaction surface essential for high-order oligomerization. Phosphorylation by CaMK2 inhibits synaptic activity.

Its subcellular location is the extracellular vesicle membrane. It localises to the postsynaptic cell membrane. It is found in the synapse. The protein resides in the postsynaptic density. The protein localises to the early endosome membrane. Its subcellular location is the cell projection. It localises to the dendrite. It is found in the cytoplasm. The protein resides in the cytoskeleton. The protein localises to the cell cortex. Its subcellular location is the dendritic spine. It localises to the cytoplasmic vesicle. It is found in the secretory vesicle. The protein resides in the acrosome. The protein localises to the clathrin-coated vesicle membrane. Master regulator of synaptic plasticity that self-assembles into virion-like capsids that encapsulate RNAs and mediate intercellular RNA transfer in the nervous system. ARC protein is released from neurons in extracellular vesicles that mediate the transfer of ARC mRNA into new target cells, where ARC mRNA can undergo activity-dependent translation. ARC capsids are endocytosed and are able to transfer ARC mRNA into the cytoplasm of neurons. Acts as a key regulator of synaptic plasticity: required for protein synthesis-dependent forms of long-term potentiation (LTP) and depression (LTD) and for the formation of long-term memory. Regulates synaptic plasticity by promoting endocytosis of AMPA receptors (AMPARs) in response to synaptic activity: this endocytic pathway maintains levels of surface AMPARs in response to chronic changes in neuronal activity through synaptic scaling, thereby contributing to neuronal homeostasis. Acts as a postsynaptic mediator of activity-dependent synapse elimination in the developing cerebellum by mediating elimination of surplus climbing fiber synapses. Accumulates at weaker synapses, probably to prevent their undesired enhancement. This suggests that ARC-containing virion-like capsids may be required to eliminate synaptic material. Required to transduce experience into long-lasting changes in visual cortex plasticity and for long-term memory. Involved in postsynaptic trafficking and processing of amyloid-beta A4 (APP) via interaction with PSEN1. In addition to its role in synapses, also involved in the regulation of the immune system: specifically expressed in skin-migratory dendritic cells and regulates fast dendritic cell migration, thereby regulating T-cell activation. This Homo sapiens (Human) protein is Activity-regulated cytoskeleton-associated protein.